The sequence spans 170 residues: Peptidyl-prolyl cis-trans isomerase-like 3 (170 aa).

In terms of domain architecture, PPIase cyclophilin-type spans 1-160 (MSVTLHTDLG…QEFRIKSVTI (160 aa)).

Belongs to the cyclophilin-type PPIase family. PPIL3 subfamily.

The enzyme catalyses [protein]-peptidylproline (omega=180) = [protein]-peptidylproline (omega=0). Its function is as follows. PPIases accelerate the folding of proteins. It catalyzes the cis-trans isomerization of proline imidic peptide bonds in oligopeptides. The protein is Peptidyl-prolyl cis-trans isomerase-like 3 (cyp4) of Rhizopus delemar (strain RA 99-880 / ATCC MYA-4621 / FGSC 9543 / NRRL 43880) (Mucormycosis agent).